A 207-amino-acid chain; its full sequence is MISRKSFDDQIKIVHNITYLSGSDEAGRGCLAGPLVVASVILKPDYFNPLIKDSKKLNPKTRQVLYDEIIKNCLDYQIIIISSKQVDELNPLQASLLGFKTTINNLKITPDLALIDGNQNIELTNIKTLQIIKGDDKSFSIACSSILAKVTRDKILDEYDQIYPNYDFKSHKGYCTKKHLLAIQKYGILDIHRKSYKPIKKISKETS.

Positions 18-207 (TYLSGSDEAG…PIKKISKETS (190 aa)) constitute an RNase H type-2 domain. Positions 24, 25, and 116 each coordinate a divalent metal cation.

This sequence belongs to the RNase HII family. Mn(2+) serves as cofactor. The cofactor is Mg(2+).

It localises to the cytoplasm. The enzyme catalyses Endonucleolytic cleavage to 5'-phosphomonoester.. Functionally, endonuclease that specifically degrades the RNA of RNA-DNA hybrids. The polypeptide is Ribonuclease HII (Mycoplasma mycoides subsp. mycoides SC (strain CCUG 32753 / NCTC 10114 / PG1)).